We begin with the raw amino-acid sequence, 303 residues long: Heme A synthase (303 aa).

The Cytoplasmic segment spans residues 1–8 (MFGKKNLK). A helical transmembrane segment spans residues 9–29 (WLGVVATLMMTFVQLGGALVT). At 30-67 (KTGSADGCGSSWPLCHGALIPEFFPIDTIIELSHRAVS) the chain is on the extracellular side. A disulfide bridge links Cys37 with Cys44. The active site involves Glu60. His63 is a binding site for heme o. A helical transmembrane segment spans residues 68-88 (ALSLLMVLWLVITAWKHIGYI). The Cytoplasmic segment spans residues 89–93 (KEIKP). Residues 94 to 114 (LSIISVGFLLLQALIGAAAVI) form a helical membrane-spanning segment. Residues 115 to 125 (WQQNDYVLALH) lie on the Extracellular side of the membrane. His125 contributes to the heme o binding site. Residues 126-146 (FGISLISFSSVFLITLIIFSI) form a helical membrane-spanning segment. Residues 147–163 (DQKYEADELYIKKPLRR) lie on the Cytoplasmic side of the membrane. A helical membrane pass occupies residues 164–184 (LTWLMAIIIYCGVYTGALVRH). The Extracellular portion of the chain corresponds to 185 to 215 (ADASLAYGGWPLPFHDLVPHSEQDWVQLTHR). His214 is a binding site for heme b. The helical transmembrane segment at 216 to 236 (IMAFIVFTIIMITYIHAVKNY) threads the bilayer. At 237–244 (PNNRTVHY) the chain is on the cytoplasmic side. A helical membrane pass occupies residues 245–265 (GYTAAFILVILQVITGALSIM). Over 266-270 (TNVNL) the chain is Extracellular. The chain crosses the membrane as a helical span at residues 271-291 (IIALFHALFITYLFGMTTYFI). His276 lines the heme b pocket. The Cytoplasmic portion of the chain corresponds to 292–303 (MLMLRSVRSDKQ).

Belongs to the COX15/CtaA family. Type 1 subfamily. In terms of assembly, interacts with CtaB. Heme b is required as a cofactor.

It is found in the cell membrane. The catalysed reaction is Fe(II)-heme o + 2 A + H2O = Fe(II)-heme a + 2 AH2. The protein operates within porphyrin-containing compound metabolism; heme A biosynthesis; heme A from heme O: step 1/1. Its function is as follows. Catalyzes the conversion of heme O to heme A by two successive hydroxylations of the methyl group at C8. The first hydroxylation forms heme I, the second hydroxylation results in an unstable dihydroxymethyl group, which spontaneously dehydrates, resulting in the formyl group of heme A. The chain is Heme A synthase from Staphylococcus aureus (strain Mu3 / ATCC 700698).